Consider the following 360-residue polypeptide: Photosystem II protein D1 1 (360 aa).

A run of 3 helical transmembrane segments spans residues 29–46 (YVGW…SATI), 118–133 (HFLI…EWEL), and 142–156 (WICI…AAAA). Histidine 118 lines the chlorophyll a pocket. Pheophytin a is bound at residue tyrosine 126. [CaMn4O5] cluster is bound by residues aspartate 170 and glutamate 189. The helical transmembrane segment at 197-218 (FHMLGVAGVFGGSLFSAMHGSL) threads the bilayer. Histidine 198 contacts chlorophyll a. A quinone contacts are provided by residues histidine 215 and 264–265 (SF). Fe cation is bound at residue histidine 215. Histidine 272 is a binding site for Fe cation. Residues 274–288 (FLAAWPVIGIWFTAL) form a helical membrane-spanning segment. Residues histidine 332, glutamate 333, aspartate 342, and alanine 344 each contribute to the [CaMn4O5] cluster site. A propeptide spanning residues 345-360 (GTESAPVAVGNADLNG) is cleaved from the precursor.

It belongs to the reaction center PufL/M/PsbA/D family. As to quaternary structure, PSII is composed of 1 copy each of membrane proteins PsbA, PsbB, PsbC, PsbD, PsbE, PsbF, PsbH, PsbI, PsbJ, PsbK, PsbL, PsbM, PsbT, PsbX, Psb30/Ycf12, peripheral proteins PsbO, CyanoQ (PsbQ), PsbU, PsbV and a large number of cofactors. It forms dimeric complexes. The cofactor is The D1/D2 heterodimer binds P680, chlorophylls that are the primary electron donor of PSII, and subsequent electron acceptors. It shares a non-heme iron and each subunit binds pheophytin, quinone, additional chlorophylls, carotenoids and lipids. D1 provides most of the ligands for the Mn4-Ca-O5 cluster of the oxygen-evolving complex (OEC). There is also a Cl(-1) ion associated with D1 and D2, which is required for oxygen evolution. The PSII complex binds additional chlorophylls, carotenoids and specific lipids.. Tyr-161 forms a radical intermediate that is referred to as redox-active TyrZ, YZ or Y-Z. In terms of processing, C-terminally processed by CtpA; processing is essential to allow assembly of the oxygen-evolving complex and thus photosynthetic growth.

It localises to the cell inner membrane. It catalyses the reaction 2 a plastoquinone + 4 hnu + 2 H2O = 2 a plastoquinol + O2. In terms of biological role, photosystem II (PSII) is a light-driven water:plastoquinone oxidoreductase that uses light energy to abstract electrons from H(2)O, generating O(2) and a proton gradient subsequently used for ATP formation. It consists of a core antenna complex that captures photons, and an electron transfer chain that converts photonic excitation into a charge separation. The D1/D2 (PsbA/PsbD) reaction center heterodimer binds P680, the primary electron donor of PSII as well as several subsequent electron acceptors. The sequence is that of Photosystem II protein D1 1 from Gloeobacter violaceus (strain ATCC 29082 / PCC 7421).